Here is a 160-residue protein sequence, read N- to C-terminus: Putative 4-hydroxy-4-methyl-2-oxoglutarate aldolase (160 aa).

Residues 76-79 (GDMI) and Arg98 each bind substrate. Asp99 provides a ligand contact to a divalent metal cation.

The protein belongs to the class II aldolase/RraA-like family. As to quaternary structure, homotrimer. It depends on a divalent metal cation as a cofactor.

It carries out the reaction 4-hydroxy-4-methyl-2-oxoglutarate = 2 pyruvate. The catalysed reaction is oxaloacetate + H(+) = pyruvate + CO2. Catalyzes the aldol cleavage of 4-hydroxy-4-methyl-2-oxoglutarate (HMG) into 2 molecules of pyruvate. Also contains a secondary oxaloacetate (OAA) decarboxylase activity due to the common pyruvate enolate transition state formed following C-C bond cleavage in the retro-aldol and decarboxylation reactions. The sequence is that of Putative 4-hydroxy-4-methyl-2-oxoglutarate aldolase from Alcanivorax borkumensis (strain ATCC 700651 / DSM 11573 / NCIMB 13689 / SK2).